The following is a 111-amino-acid chain: MSDILSELHQVLESRKGANPDSSYVASLYAKGLNKILEKVGEEAIETILAARDAEVSGEHQALISETADLWFHSLVMLAKLGEHPDKVLAELQRRFGLSGHDEKAARSGKH.

This sequence belongs to the PRA-PH family.

The protein resides in the cytoplasm. It catalyses the reaction 1-(5-phospho-beta-D-ribosyl)-ATP + H2O = 1-(5-phospho-beta-D-ribosyl)-5'-AMP + diphosphate + H(+). Its pathway is amino-acid biosynthesis; L-histidine biosynthesis; L-histidine from 5-phospho-alpha-D-ribose 1-diphosphate: step 2/9. The protein is Phosphoribosyl-ATP pyrophosphatase of Alcanivorax borkumensis (strain ATCC 700651 / DSM 11573 / NCIMB 13689 / SK2).